A 251-amino-acid polypeptide reads, in one-letter code: Azurocidin (251 aa).

Residues 1–19 (MTRLTVLALLAGLLASSRA) form the signal peptide. The propeptide at 20-26 (GSSPLLD) is removed in mature form. A propeptide spans 25 to 26 (LD) (dipeptide found in non-mature form). A Peptidase S1 domain is found at 27–244 (IVGGRKARPR…FRDWIDGVLN (218 aa)). Residues 46–70 (NQGRHFCGGALIHARFVMTAASCFQ) form a possesses antibiotic activity region. Cys-52 and Cys-68 form a disulfide bridge. Asn-126 is a glycosylation site (N-linked (GlcNAc...) asparagine; partial). The N-linked (GlcNAc...) asparagine glycan is linked to Asn-140. 3 disulfides stabilise this stretch: Cys-149/Cys-207, Cys-180/Cys-186, and Cys-197/Cys-222. Residue Asn-171 is glycosylated (N-linked (GlcNAc...) asparagine; partial). The propeptide at 249–251 (GPA) is removed in mature form.

The protein belongs to the peptidase S1 family. Elastase subfamily. Cleavage of the N-terminal propeptide which is composed of 7 amino acids occurs in two steps. The initial cleavage of 5 amino acids is followed by the cleavage of a dipeptide to produce the mature form.

The protein localises to the cytoplasmic granule membrane. Functionally, this is a neutrophil granule-derived antibacterial and monocyte- and fibroblast-specific chemotactic glycoprotein. Binds heparin. The cytotoxic action is limited to many species of Gram-negative bacteria; this specificity may be explained by a strong affinity of the very basic N-terminal half for the negatively charged lipopolysaccharides that are unique to the Gram-negative bacterial outer envelope. It may play a role in mediating recruitment of monocytes in the second wave of inflammation. Has antibacterial activity against the Gram-negative bacterium P.aeruginosa, this activity is inhibited by LPS from P.aeruginosa. Acting alone, it does not have antimicrobial activity against the Gram-negative bacteria A.actinomycetemcomitans ATCC 29532, A.actinomycetemcomitans NCTC 9709, A.actinomycetemcomitans FDC-Y4, H.aphrophilus ATCC 13252, E.corrodens ATCC 23834, C.sputigena ATCC 33123, Capnocytophaga sp ATCC 33124, Capnocytophaga sp ATCC 27872 or E.coli ML-35. Has antibacterial activity against C.sputigena ATCC 33123 when acting synergistically with either elastase or cathepsin G. The sequence is that of Azurocidin from Homo sapiens (Human).